The sequence spans 889 residues: Chitin synthase I (889 aa).

Asn43 is a glycosylation site (N-linked (GlcNAc...) asparagine). Residues 94-138 form a disordered region; the sequence is GEYFDGYNQGHPPQEHQAYDDDGQPLIEDQHGYSDNPQHQTQTPA. Positions 126 to 137 are enriched in polar residues; it reads YSDNPQHQTQTP. Residue Asn199 is glycosylated (N-linked (GlcNAc...) asparagine). A run of 9 helical transmembrane segments spans residues 431 to 451, 530 to 550, 560 to 580, 606 to 626, 641 to 661, 687 to 707, 716 to 736, 815 to 835, and 861 to 881; these read SAFG…YVAL, RWLN…YEFF, LAFF…WFAI, ILGV…FVLS, MVWF…FIAV, TLII…IIMF, FIQY…YAFC, GVVL…LSSA, and IVLW…MWFL.

This sequence belongs to the chitin synthase family. Class I subfamily. In terms of tissue distribution, expressed in hyphal bodies.

The protein resides in the cell membrane. The enzyme catalyses [(1-&gt;4)-N-acetyl-beta-D-glucosaminyl](n) + UDP-N-acetyl-alpha-D-glucosamine = [(1-&gt;4)-N-acetyl-beta-D-glucosaminyl](n+1) + UDP + H(+). Polymerizes chitin, a structural polymer of the cell wall and septum, by transferring the sugar moiety of UDP-GlcNAc to the non-reducing end of the growing chitin polymer. Contributes to the production of conidia and the ability of fungal conidia to germinate. Not involved in fungal stress tolerances. The chain is Chitin synthase I from Metarhizium acridum (strain CQMa 102).